Reading from the N-terminus, the 524-residue chain is GMP synthase [glutamine-hydrolyzing] (524 aa).

Residues 9-207 (RILILDFGSQ…VIHICQCIPN (199 aa)) enclose the Glutamine amidotransferase type-1 domain. Catalysis depends on Cys86, which acts as the Nucleophile. Active-site residues include His181 and Glu183. A GMPS ATP-PPase domain is found at 208 to 399 (WTTKHIIEDS…LGLPADLIYR (192 aa)). 235 to 241 (SGGVDSA) provides a ligand contact to ATP.

Homodimer.

It carries out the reaction XMP + L-glutamine + ATP + H2O = GMP + L-glutamate + AMP + diphosphate + 2 H(+). The protein operates within purine metabolism; GMP biosynthesis; GMP from XMP (L-Gln route): step 1/1. Catalyzes the synthesis of GMP from XMP. This Coxiella burnetii (strain CbuK_Q154) (Coxiella burnetii (strain Q154)) protein is GMP synthase [glutamine-hydrolyzing].